We begin with the raw amino-acid sequence, 498 residues long: Dynein regulatory complex subunit 2 (498 aa).

Coiled-coil stretches lie at residues 98–160 (VIKS…RKTI), 250–311 (KDEK…KAQR), and 417–441 (SLRH…QYLD).

The protein belongs to the DRC2 family. In terms of assembly, component of the nexin-dynein regulatory complex (N-DRC). Interacts with DRC1.

The protein resides in the cytoplasm. It localises to the cytoskeleton. Its subcellular location is the flagellum basal body. It is found in the cell projection. The protein localises to the cilium. The protein resides in the flagellum. It localises to the flagellum axoneme. Its function is as follows. Component of the nexin-dynein regulatory complex (N-DRC), a key regulator of ciliary/flagellar motility which maintains the alignment and integrity of the distal axoneme and regulates microtubule sliding in motile axonemes. Plays a critical role in the assembly of N-DRC and also stabilizes the assembly of multiple inner dynein arms and radial spokes. Coassembles with DRC1 to form a central scaffold needed for assembly of the N-DRC and its attachment to the outer doublet microtubules. This is Dynein regulatory complex subunit 2 (CCDC65) from Bos taurus (Bovine).